We begin with the raw amino-acid sequence, 561 residues long: Putative transport protein YbjL (561 aa).

5 helical membrane-spanning segments follow: residues 8-28 (LLNG…LCLG), 32-52 (LGSI…LLGQ), 66-86 (FMLF…SIFF), 94-114 (MLAL…GKLF), and 158-178 (NLSL…IVGA). RCK C-terminal domains are found at residues 200–288 (RGLD…SFRN) and 292–373 (VFDR…RIGF). The next 5 membrane-spanning stretches (helical) occupy residues 383-403 (LLAF…TFQF), 406-426 (FSFG…LGFL), 447-467 (FGLM…ISNG), 475-495 (MLIA…LFGA), and 540-560 (AIAN…WPGL).

It belongs to the AAE transporter (TC 2.A.81) family. YbjL subfamily.

It is found in the cell membrane. This is Putative transport protein YbjL from Salmonella arizonae (strain ATCC BAA-731 / CDC346-86 / RSK2980).